Reading from the N-terminus, the 203-residue chain is Guanylate kinase (203 aa).

The region spanning 3–181 (GSLFIVAAPS…AHTDLRAIVQ (179 aa)) is the Guanylate kinase-like domain. 10–17 (APSGAGKT) serves as a coordination point for ATP.

Belongs to the guanylate kinase family.

It is found in the cytoplasm. It carries out the reaction GMP + ATP = GDP + ADP. Essential for recycling GMP and indirectly, cGMP. This chain is Guanylate kinase, found in Nitrosococcus oceani (strain ATCC 19707 / BCRC 17464 / JCM 30415 / NCIMB 11848 / C-107).